We begin with the raw amino-acid sequence, 315 residues long: tRNA-dihydrouridine(16) synthase (315 aa).

FMN contacts are provided by residues 7-9 and glutamine 68; that span reads PME. Cysteine 98 acts as the Proton donor in catalysis. FMN contacts are provided by residues lysine 139, 200 to 202, and 224 to 225; these read NGE and GR.

It belongs to the Dus family. DusC subfamily. It depends on FMN as a cofactor.

It catalyses the reaction 5,6-dihydrouridine(16) in tRNA + NADP(+) = uridine(16) in tRNA + NADPH + H(+). It carries out the reaction 5,6-dihydrouridine(16) in tRNA + NAD(+) = uridine(16) in tRNA + NADH + H(+). Its function is as follows. Catalyzes the synthesis of 5,6-dihydrouridine (D), a modified base found in the D-loop of most tRNAs, via the reduction of the C5-C6 double bond in target uridines. DusC specifically modifies U16 in tRNAs. This chain is tRNA-dihydrouridine(16) synthase, found in Escherichia coli (strain K12).